Here is a 302-residue protein sequence, read N- to C-terminus: Protein transport protein SEC13 homolog B (302 aa).

WD repeat units lie at residues Gly9–Gln48, Gly54–Gln95, Asp101–Thr142, Ala148–Asp201, Lys208–Glu251, and Asp257–Gln296.

It belongs to the WD repeat SEC13 family. In terms of assembly, part of the nuclear pore complex (NPC). The NPC has an eight-fold symmetrical structure comprising a central transport channel and two rings, the cytoplasmic and nuclear rings, to which eight filaments are attached. The cytoplasmic filaments have loose ends, while the nuclear filaments are joined in a distal ring, forming a nuclear basket. NPCs are highly dynamic in configuration and composition, and can be devided in 3 subcomplexes, the NUP62 subcomplex, the NUP107-160 subcomplex and the NUP93 subcomplex, containing approximately 30 different nucleoporin proteins. Interacts with MAG5, SEC31A and SEC31B.

The protein localises to the golgi apparatus. The protein resides in the endoplasmic reticulum. It localises to the nucleus envelope. Its subcellular location is the nucleus. It is found in the nuclear pore complex. Its function is as follows. Required for protein transport from the endoplasmic reticulum to the Golgi apparatus. The protein is Protein transport protein SEC13 homolog B of Arabidopsis thaliana (Mouse-ear cress).